The primary structure comprises 161 residues: Probable ribosome biogenesis protein RLP24 (161 aa).

This sequence belongs to the eukaryotic ribosomal protein eL24 family. Associated with nucleolar and cytoplasmic pre-60S particles. At the end of biogenesis it dissociates from cytoplasmic pre-60S particles and is likely to be exchanged for its ribosomal homolog, RPL24.

It is found in the nucleus. It localises to the nucleolus. In terms of biological role, involved in the biogenesis of the 60S ribosomal subunit. Ensures the docking of GTPBP4/NOG1 to pre-60S particles. This Danio rerio (Zebrafish) protein is Probable ribosome biogenesis protein RLP24 (rsl24d1).